The chain runs to 567 residues: Protein NRT1/ PTR FAMILY 4.5 (567 aa).

Helical transmembrane passes span 30 to 50, 70 to 92, 99 to 118, 147 to 167, 189 to 209, 219 to 239, 326 to 346, 374 to 394, 411 to 431, 448 to 468, 491 to 511, and 535 to 555; these read GMLA…AFLA, SSSE…GFLA, FVIF…LLTI, AFLF…KGSL, FFNY…TFVV, WGFG…LLGS, IVLK…CLAQ, VFPV…IIPF, IGVG…VELK, LPIT…ADLF, SLSW…VPIV, and LFYW…LFWA.

This sequence belongs to the major facilitator superfamily. Proton-dependent oligopeptide transporter (POT/PTR) (TC 2.A.17) family. In terms of tissue distribution, expressed in flowers and siliques.

It is found in the membrane. Functionally, involved in abscisic acid transport. This is Protein NRT1/ PTR FAMILY 4.5 (NPF4.5) from Arabidopsis thaliana (Mouse-ear cress).